A 973-amino-acid polypeptide reads, in one-letter code: MSARPFSTPFDRERRVRSTLKKVFGFDSFKTPLQESAIMAVVKGDKDVFVCMPTGAGKSLCYQLPAVLAKGITIVVSPLIALIQDQVDHLLALKVQVSSLNSKLSVQERKELLSDLERDKPRTKLLYITPEMAASASFQPTLNSLLSRNLLSYLVVDEAHCVSQWGHDFRPDYLRLGALRSRLAHAPCVALTATATPQVQEDVFAALHLKQPVASFKTPCFRANLFYDVQFKELIPDVYGNLRDFCLKALGQKADNGSSSGCGIVYCRTREACEQLAIELSSRGVNAKAYHAGLKASERTQVQNEWMEEKVPVIVATISFGMGVDKANVRFVAHWNIAKSMAGYYQESGRAGRDGKPSWCRLYYSRNDRDQVSFLIRKELAKLQEKRGNKPSDKATLLAFDALVTFCEEVGCRHAAIAKYFGDAPPACAKGCDCCQSPAAIRKKLDALEHSSSWGKTCIGPSQGDGFDPELYEGGRRGYGGFSRYDEGSGGSGDEGRDEAHKREWNLFYQRQMSLRKGKEAKPEEFTPPGEDCPLRDASSRKIPKLTVKAREHCLRLLEEALNSNHQAAGSTHGADLQAKAVELEHETFRSAKMVNLYKASVLKKVAEIHKASKDGQLYDMESSTKSCGAIAELLEPSDYDIPPTSHLYSLKPKRVGAGFSKGPCPFQTATELLGKSQTEKLAPEAALESEQEPSGWVCDPQDGDRSKPCLGYQEEAPGSRTNCGDPSPEKRTKGSSQGSAKARASKRQQLLATAARKDSQSITRFLRQRTECPPPAASVPSSEDASPCGDVPGKCTEEVGAQGHLVAVFQTECPRERLSTCSLEDQSLPKGQPSPLKETQAEKRPRPQQESQEKRAQKRLRPSTNSSALASDPSTENRVAREPCQLSAPGISLKEAADIVVRYLTPFYKEGRFISKDLFKGFARHLSHLLAQKLSPGRSVKEEAQSLIKQFFHNRARCESEADWHGLCGPQR.

The Helicase ATP-binding domain maps to 39-213; the sequence is MAVVKGDKDV…FAALHLKQPV (175 aa). 52–59 contributes to the ATP binding site; that stretch reads MPTGAGKS. The DEAH box signature appears at 157 to 160; that stretch reads DEAH. The Helicase C-terminal domain occupies 241–398; that stretch reads NLRDFCLKAL…NKPSDKATLL (158 aa). The Zn(2+) site is built by Cys412, Cys428, Cys432, and Cys435. 2 positions are modified to phosphoserine: Ser489 and Ser492. An interaction with POLR2A region spans residues 491-621; that stretch reads GSGDEGRDEA…ASKDGQLYDM (131 aa). Disordered stretches follow at residues 518 to 538, 679 to 795, and 822 to 884; these read GKEA…LRDA, TEKL…VPGK, and CSLE…AREP. Thr527 is subject to Phosphothreonine. The tract at residues 653 to 726 is interaction with RAD51; the sequence is PKRVGAGFSK…APGSRTNCGD (74 aa). Ser728 is modified (phosphoserine; by CDK1). The span at 840–856 shows a compositional bias: basic and acidic residues; it reads TQAEKRPRPQQESQEKR. The segment covering 863–878 has biased composition (polar residues); that stretch reads PSTNSSALASDPSTEN.

Belongs to the helicase family. RecQ subfamily. As to quaternary structure, monomer. Interacts with TOP2A, TOP3A and TOP3B. Interacts with RNA polymerase II subunit POLR2A. Identified in a complex with the RNA polymerase II core bound to DNA. Interacts with RAD51. Interacts with WRN; this interaction stimulates WRN helicase activity on DNA fork duplexes. Interacts with MUS1; this interaction promotes MUS81-dependent mitotic DNA synthesis. Requires Zn(2+) as cofactor. Post-translationally, phosphorylated by CDK1 at Ser-728; this phosphorylation is required for RECQL5-mediated disruption of RAD51 filaments on stalled replication forks.

It localises to the nucleus. The protein localises to the nucleoplasm. The catalysed reaction is Couples ATP hydrolysis with the unwinding of duplex DNA by translocating in the 3'-5' direction.. It carries out the reaction ATP + H2O = ADP + phosphate + H(+). Its function is as follows. DNA helicase that plays an important role in DNA replication, transcription and repair. Binds to the RNA polymerase II subunit POLR2A during transcription elongation and suppresses transcription-associated genomic instability. Also associates with POLR1A and enforces the stability of ribosomal DNA arrays. Plays an important role in mitotic chromosome separation after cross-over events and cell cycle progress. Mechanistically, removes RAD51 filaments protecting stalled replication forks at common fragile sites and stimulates MUS81-EME1 endonuclease leading to mitotic DNA synthesis. Required for efficient DNA repair, including repair of inter-strand cross-links. Stimulates DNA decatenation mediated by TOP2A. Prevents sister chromatid exchange and homologous recombination. The chain is ATP-dependent DNA helicase Q5 (Recql5) from Rattus norvegicus (Rat).